The primary structure comprises 525 residues: Bifunctional enzyme NanE/NanK (525 aa).

The tract at residues 1–241 (MRGSPRNLCR…DAVESAAKPS (241 aa)) is manNAc-6-P epimerase. Residues 242 to 525 (SPVLAFDIGG…VADLAATYFS (284 aa)) form a manNAc kinase region. ATP is bound by residues 246-253 (AFDIGGTK) and 372-379 (GIGGGIVL).

The protein in the N-terminal section; belongs to the NanE family. This sequence in the C-terminal section; belongs to the ROK (NagC/XylR) family. NanK subfamily.

It carries out the reaction an N-acyl-D-glucosamine 6-phosphate = an N-acyl-D-mannosamine 6-phosphate. The catalysed reaction is an N-acyl-D-mannosamine + ATP = an N-acyl-D-mannosamine 6-phosphate + ADP + H(+). It functions in the pathway amino-sugar metabolism; N-acetylneuraminate degradation; D-fructose 6-phosphate from N-acetylneuraminate: step 2/5. The protein operates within amino-sugar metabolism; N-acetylneuraminate degradation; D-fructose 6-phosphate from N-acetylneuraminate: step 3/5. Its function is as follows. Converts N-acetylmannosamine-6-phosphate (ManNAc-6-P) to N-acetylglucosamine-6-phosphate (GlcNAc-6-P). In terms of biological role, catalyzes the phosphorylation of N-acetylmannosamine (ManNAc) to ManNAc-6-P. In Brucella suis biovar 1 (strain 1330), this protein is Bifunctional enzyme NanE/NanK (nanEK).